The sequence spans 204 residues: Probable nicotinate-nucleotide adenylyltransferase (204 aa).

Belongs to the NadD family.

It carries out the reaction nicotinate beta-D-ribonucleotide + ATP + H(+) = deamido-NAD(+) + diphosphate. It participates in cofactor biosynthesis; NAD(+) biosynthesis; deamido-NAD(+) from nicotinate D-ribonucleotide: step 1/1. Catalyzes the reversible adenylation of nicotinate mononucleotide (NaMN) to nicotinic acid adenine dinucleotide (NaAD). This is Probable nicotinate-nucleotide adenylyltransferase from Dehalococcoides mccartyi (strain ATCC BAA-2266 / KCTC 15142 / 195) (Dehalococcoides ethenogenes (strain 195)).